A 288-amino-acid polypeptide reads, in one-letter code: Small ribosomal subunit protein uS9m (288 aa).

Positions V269–R288 are disordered.

Belongs to the universal ribosomal protein uS9 family.

The protein resides in the mitochondrion. This is Small ribosomal subunit protein uS9m (MRPS9) from Candida glabrata (strain ATCC 2001 / BCRC 20586 / JCM 3761 / NBRC 0622 / NRRL Y-65 / CBS 138) (Yeast).